Here is a 758-residue protein sequence, read N- to C-terminus: G-protein alpha subunit activating protein gbas-1 (758 aa).

Acidic residues predominate over residues 30-48 (LDEVDNADFEREDDEEEVL). A disordered region spans residues 30–70 (LDEVDNADFEREDDEEEVLSEPSESPYTSTPKSSKRVNKTR). Positions 49–61 (SEPSESPYTSTPK) are enriched in low complexity. Residues 653–666 (ETVTVEEFLMNSYS) carry the GBA motif. A disordered region spans residues 668–690 (AAPSTSTAPAPPKAPVTAPPAPQ). Over residues 676–689 (PAPPKAPVTAPPAP) the composition is skewed to pro residues.

As to quaternary structure, interacts (via GBA motif) with guanine nucleotide-binding protein G(o) subunit alpha goa-1 (in GDP-bound form); the interaction leads to activation of goa-1. As to expression, expressed in some neurons including the head and tail neurons, HSN and VC, in a subset of glial cells, in the distal tips cells and in the intestine.

Its function is as follows. Acts as a non-receptor guanine nucleotide exchange factor which binds to and activates G-protein alpha subunit goa-1. This Caenorhabditis elegans protein is G-protein alpha subunit activating protein gbas-1.